Reading from the N-terminus, the 150-residue chain is MKDKVYKRPVSILVVIYAQDTKRVLMLQRRDDPDFWQSVTGSVEEGETAPQAAMREVKEEVTIDVVAEQLTLIDCQRTVEFEIFSHLRHRYAPGVTRNTESWFCLALPHERQIVFTEHLAYKWLDAPAAAALTKSWSNRQAIEQFVINAA.

In terms of domain architecture, Nudix hydrolase spans 5 to 146 (VYKRPVSILV…SNRQAIEQFV (142 aa)). Substrate-binding residues include Lys7, Arg29, and Thr40. Positions 41–62 (GSVEEGETAPQAAMREVKEEVT) match the Nudix box motif. Glu56 and Glu60 together coordinate Mg(2+). 81–84 (FEIF) lines the substrate pocket. Glu117 contributes to the Mg(2+) binding site. Residue Ser135 coordinates substrate.

The protein belongs to the Nudix hydrolase family. It depends on Mg(2+) as a cofactor.

The catalysed reaction is 7,8-dihydroneopterin 3'-triphosphate + H2O = 7,8-dihydroneopterin 3'-phosphate + diphosphate + H(+). Catalyzes the hydrolysis of dihydroneopterin triphosphate to dihydroneopterin monophosphate and pyrophosphate. Required for efficient folate biosynthesis. Can also hydrolyze nucleoside triphosphates with a preference for dATP. The polypeptide is Dihydroneopterin triphosphate diphosphatase (nudB) (Escherichia coli O157:H7).